The sequence spans 314 residues: MFNINPLENLKLYISSRPPLVVFMISVSAMAIAFLTLGYFFKIKEIKSPEMAEDWNTFLLRFNDLDLCVSENETLKHLTNDTAAPESTVTSGQARTSTQSPQPLEDAGPVNISVAITLTLDPLKPFGGYSRNVTHLYSTILGHQIGLSGREAQEEINITFTLPTSWSSDDCALHGHCEQVVFTACMTLTAHPGVFPVTVQPPHCVPDTYSNATLWYKIFTTARDANTKYAQDYNPFWCYKGAIGKVYHALNPKLTVIVPDDDRSLINLHLMHTSYFLFVMVITMFCYAVIKGRPSKLRQSNPEFCPEKVALADA.

A helical membrane pass occupies residues 21–41 (VVFMISVSAMAIAFLTLGYFF). The disordered stretch occupies residues 79–107 (TNDTAAPESTVTSGQARTSTQSPQPLEDA). Polar residues predominate over residues 80–102 (NDTAAPESTVTSGQARTSTQSPQ). Helical transmembrane passes span 179–199 (QVVFTACMTLTAHPGVFPVTV), 236–258 (FWCYKGAIGKVYHALNPKLTVIV), and 270–290 (LMHTSYFLFVMVITMFCYAVI).

Belongs to the TMEM248 family.

It localises to the membrane. This Bos taurus (Bovine) protein is Transmembrane protein 248 (TMEM248).